Consider the following 400-residue polypeptide: NADPH dehydrogenase 1 (400 aa).

Residues Thr-38 and Gln-115 each coordinate FMN. Substrate-binding residues include His-192 and Asn-195. Tyr-197 (proton donor) is an active-site residue. 2 residues coordinate FMN: Arg-244 and Arg-349. A substrate-binding site is contributed by Tyr-376.

As to quaternary structure, homodimer or heterodimer. FMN serves as cofactor.

The catalysed reaction is A + NADPH + H(+) = AH2 + NADP(+). In terms of biological role, flavin-dependent enoate reductase that catalyzes the chemo- and stereoslective hydrogenation of electron-poor alkenes. The enzyme is reduced by NADPH, and oxygen, quinones, and alpha,beta-unsaturated aldehydes and ketones can act as electron acceptors to complete catalytic turnover. The physiological oxidant remains elusive. The sequence is that of NADPH dehydrogenase 1 from Saccharomyces pastorianus (Lager yeast).